Consider the following 218-residue polypeptide: 3,4-dihydroxy-2-butanone 4-phosphate synthase (218 aa).

D-ribulose 5-phosphate is bound by residues 38–39 (RE), Asp-43, 151–155 (RRGHT), and Glu-175. Glu-39 contributes to the Mg(2+) binding site. His-154 is a binding site for Mg(2+).

The protein belongs to the DHBP synthase family. In terms of assembly, homodimer. Mg(2+) serves as cofactor. Requires Mn(2+) as cofactor.

It carries out the reaction D-ribulose 5-phosphate = (2S)-2-hydroxy-3-oxobutyl phosphate + formate + H(+). The protein operates within cofactor biosynthesis; riboflavin biosynthesis; 2-hydroxy-3-oxobutyl phosphate from D-ribulose 5-phosphate: step 1/1. Catalyzes the conversion of D-ribulose 5-phosphate to formate and 3,4-dihydroxy-2-butanone 4-phosphate. In Vibrio atlanticus (strain LGP32) (Vibrio splendidus (strain Mel32)), this protein is 3,4-dihydroxy-2-butanone 4-phosphate synthase.